Here is a 381-residue protein sequence, read N- to C-terminus: Lipid-A-disaccharide synthase (381 aa).

This sequence belongs to the LpxB family.

It carries out the reaction a lipid X + a UDP-2-N,3-O-bis[(3R)-3-hydroxyacyl]-alpha-D-glucosamine = a lipid A disaccharide + UDP + H(+). It participates in bacterial outer membrane biogenesis; LPS lipid A biosynthesis. Its function is as follows. Condensation of UDP-2,3-diacylglucosamine and 2,3-diacylglucosamine-1-phosphate to form lipid A disaccharide, a precursor of lipid A, a phosphorylated glycolipid that anchors the lipopolysaccharide to the outer membrane of the cell. The sequence is that of Lipid-A-disaccharide synthase from Solibacter usitatus (strain Ellin6076).